The primary structure comprises 344 residues: L-rhamnose-proton symporter (344 aa).

The next 10 helical transmembrane spans lie at 4-24 (AITM…CFYA), 38-58 (WSVG…ALLL), 68-88 (FSLS…IGNI), 101-121 (MGIG…TPII), 137-157 (TLLG…AGQL), 175-195 (LVLA…MNAA), 214-234 (LPSY…FCFI), 259-279 (VLLS…YAWG), 290-310 (ISWM…GLVL), and 323-343 (VLSL…IGMA).

The protein belongs to the L-rhamnose transporter (TC 2.A.7.6) family.

It is found in the cell inner membrane. It carries out the reaction L-rhamnopyranose(in) + H(+)(in) = L-rhamnopyranose(out) + H(+)(out). In terms of biological role, uptake of L-rhamnose across the cytoplasmic membrane with the concomitant transport of protons into the cell (symport system). This chain is L-rhamnose-proton symporter, found in Shigella flexneri.